A 416-amino-acid chain; its full sequence is Coenzyme F420H(2) oxidase (416 aa).

Fe cation is bound by residues His87, Glu89, Asp91, His92, His155, Asp174, and His239. In terms of domain architecture, Flavodoxin-like spans 266 to 407 (AVIVYDTMHY…NCYNMGKELA (142 aa)). FMN contacts are provided by residues 272-277 (TMHYST), 324-327 (TIYD), and 359-364 (SMGGEG).

In the N-terminal section; belongs to the zinc metallo-hydrolase group 3 family. FMN serves as cofactor. Requires Fe cation as cofactor.

The enzyme catalyses 2 reduced coenzyme F420-(gamma-L-Glu)(n) + O2 = 2 oxidized coenzyme F420-(gamma-L-Glu)(n) + 2 H2O + 2 H(+). In terms of biological role, catalyzes the oxidation of F420H(2) with O(2). May be involved in O(2) detoxification, reducing the intracellular O(2) concentration to a level allowing growth at the expense of methane formation. The protein is Coenzyme F420H(2) oxidase (fprA) of Methanocaldococcus jannaschii (strain ATCC 43067 / DSM 2661 / JAL-1 / JCM 10045 / NBRC 100440) (Methanococcus jannaschii).